The sequence spans 1186 residues: Pumilio homolog 1 (1186 aa).

Ser-2 is modified (N-acetylserine). Ser-19 bears the Phosphoserine mark. The tract at residues 22 to 73 is disordered; the sequence is LKHHPQEPANPNMPVVLTSGTGSQAQPQPAANQALAAGTHSSPVPGSIGVAG. Residues 45 to 58 show a composition bias toward low complexity; the sequence is QAQPQPAANQALAA. Phosphoserine is present on residues Ser-75, Ser-98, and Ser-106. Thr-112 carries the phosphothreonine modification. Ser-124, Ser-159, Ser-197, Ser-209, and Ser-229 each carry phosphoserine. Positions 233–272 are disordered; sequence SCLRKGGFGPRDADSDENDKGEKKNKGTFDGDKLGDLKEE. Over residues 250–272 the composition is skewed to basic and acidic residues; the sequence is NDKGEKKNKGTFDGDKLGDLKEE. The residue at position 305 (Ser-305) is a Phosphoserine. A compositionally biased stretch (low complexity) spans 485-502; that stretch reads TNSANQQTTPQAQQGQQQ. Disordered regions lie at residues 485 to 524 and 613 to 648; these read TNSA…GQQT and AGTT…FYGN. Over residues 511–524 the composition is skewed to polar residues; sequence RPLTPNQNQQGQQT. Phosphothreonine is present on Thr-514. The span at 626–639 shows a compositional bias: low complexity; that stretch reads QQPQPQPQQQPNNN. A phosphoserine mark is found at Ser-709 and Ser-714. The tract at residues 742 to 775 is disordered; that stretch reads GPVGMPLPSQGPGHSQTPPPSLSSHGSSSSLNLG. The segment covering 763-775 has biased composition (low complexity); it reads LSSHGSSSSLNLG. Arg-796 carries the omega-N-methylarginine modification. Residues Ser-806 and Ser-822 each carry the phosphoserine modification. The 341-residue stretch at 828-1168 folds into the PUM-HD domain; that stretch reads GRSRLLEDFR…HILAKLEKYY (341 aa). Pumilio repeat units lie at residues 848–883, 884–919, 920–955, 956–991, 992–1027, 1028–1063, 1064–1099, and 1103–1142; these read EIAG…LVFN, EILQ…ALAE, RIRG…EMVR, ELDG…FIID, AFKG…PILE, ELHQ…KIVA, EIRG…VLID, and TMND…IVMH. The tract at residues 863–867 is adenine-nucleotide binding in RNA target; that stretch reads SRFIQ. The tract at residues 899–903 is uracil-nucleotide binding in RNA target; it reads NYVIQ. An adenine-nucleotide binding in RNA target region spans residues 935–939; that stretch reads CRVIQ. A non-specific-nucleotide binding in RNA target region spans residues 971–975; sequence NHVVQ. Residues 1007–1011 are adenine-nucleotide binding in RNA target; sequence CRVIQ. Residues 1043 to 1047 form a uracil-nucleotide binding in RNA target region; it reads NYVIQ. Guanine-nucleotide binding in RNA target regions lie at residues 1079–1083 and 1080–1083; these read SNVVE and NVVE. The tract at residues 1122-1126 is uracil-nucleotide binding in RNA target; it reads NYVVQ.

As to quaternary structure, recruits the CCR4-POP2-NOT deadenylase leading to translational inhibition and mRNA degradation. Interacts with TRIM71 (via NHL repeats) in an RNA-dependent manner. In terms of processing, phosphorylation at Ser-714 promotes RNA-binding activity. Following growth factor stimulation phosphorylated at Ser-714, promoting binding to the 3'-UTR of CDKN1B/p27 mRNA.

Its subcellular location is the cytoplasm. The protein localises to the P-body. The protein resides in the cytoplasmic granule. Sequence-specific RNA-binding protein that acts as a post-transcriptional repressor by binding the 3'-UTR of mRNA targets. Binds to an RNA consensus sequence, the Pumilio Response Element (PRE), 5'-UGUANAUA-3', that is related to the Nanos Response Element (NRE). Mediates post-transcriptional repression of transcripts via different mechanisms: acts via direct recruitment of the CCR4-POP2-NOT deadenylase leading to translational inhibition and mRNA degradation. Also mediates deadenylation-independent repression by promoting accessibility of miRNAs. Following growth factor stimulation, phosphorylated and binds to the 3'-UTR of CDKN1B/p27 mRNA, inducing a local conformational change that exposes miRNA-binding sites, promoting association of miR-221 and miR-222, efficient suppression of CDKN1B/p27 expression, and rapid entry to the cell cycle. Acts as a post-transcriptional repressor of E2F3 mRNAs by binding to its 3'-UTR and facilitating miRNA regulation. Represses a program of genes necessary to maintain genomic stability such as key mitotic, DNA repair and DNA replication factors. Its ability to repress those target mRNAs is regulated by the lncRNA NORAD (non-coding RNA activated by DNA damage) which, due to its high abundance and multitude of PUMILIO binding sites, is able to sequester a significant fraction of PUM1 and PUM2 in the cytoplasm. Involved in neuronal functions by regulating ATXN1 mRNA levels: acts by binding to the 3'-UTR of ATXN1 transcripts, leading to their down-regulation independently of the miRNA machinery. Plays a role in cytoplasmic sensing of viral infection. In testis, acts as a post-transcriptional regulator of spermatogenesis by binding to the 3'-UTR of mRNAs coding for regulators of p53/TP53. Involved in embryonic stem cell renewal by facilitating the exit from the ground state: acts by targeting mRNAs coding for naive pluripotency transcription factors and accelerates their down-regulation at the onset of differentiation. Binds specifically to miRNA MIR199A precursor, with PUM2, regulates miRNA MIR199A expression at a postranscriptional level. The sequence is that of Pumilio homolog 1 (PUM1) from Pongo abelii (Sumatran orangutan).